Here is a 398-residue protein sequence, read N- to C-terminus: 4-hydroxy-3-methylbut-2-en-1-yl diphosphate synthase (ferredoxin) (398 aa).

[4Fe-4S] cluster contacts are provided by Cys-306, Cys-309, Cys-340, and Glu-347.

It belongs to the IspG family. Requires [4Fe-4S] cluster as cofactor.

The enzyme catalyses (2E)-4-hydroxy-3-methylbut-2-enyl diphosphate + 2 oxidized [2Fe-2S]-[ferredoxin] + H2O = 2-C-methyl-D-erythritol 2,4-cyclic diphosphate + 2 reduced [2Fe-2S]-[ferredoxin] + H(+). The protein operates within isoprenoid biosynthesis; isopentenyl diphosphate biosynthesis via DXP pathway; isopentenyl diphosphate from 1-deoxy-D-xylulose 5-phosphate: step 5/6. Functionally, converts 2C-methyl-D-erythritol 2,4-cyclodiphosphate (ME-2,4cPP) into 1-hydroxy-2-methyl-2-(E)-butenyl 4-diphosphate. The polypeptide is 4-hydroxy-3-methylbut-2-en-1-yl diphosphate synthase (ferredoxin) (Synechococcus sp. (strain CC9605)).